Consider the following 311-residue polypeptide: Porphobilinogen deaminase (311 aa).

At Cys-241 the chain carries S-(dipyrrolylmethanemethyl)cysteine.

It belongs to the HMBS family. Monomer. The cofactor is dipyrromethane.

The catalysed reaction is 4 porphobilinogen + H2O = hydroxymethylbilane + 4 NH4(+). The protein operates within porphyrin-containing compound metabolism; protoporphyrin-IX biosynthesis; coproporphyrinogen-III from 5-aminolevulinate: step 2/4. Functionally, tetrapolymerization of the monopyrrole PBG into the hydroxymethylbilane pre-uroporphyrinogen in several discrete steps. The sequence is that of Porphobilinogen deaminase from Bacillus pumilus (strain SAFR-032).